A 514-amino-acid chain; its full sequence is ATP synthase subunit alpha (514 aa).

170-177 contributes to the ATP binding site; the sequence is GDRQIGKT.

Belongs to the ATPase alpha/beta chains family. In terms of assembly, F-type ATPases have 2 components, CF(1) - the catalytic core - and CF(0) - the membrane proton channel. CF(1) has five subunits: alpha(3), beta(3), gamma(1), delta(1), epsilon(1). CF(0) has three main subunits: a(1), b(2) and c(9-12). The alpha and beta chains form an alternating ring which encloses part of the gamma chain. CF(1) is attached to CF(0) by a central stalk formed by the gamma and epsilon chains, while a peripheral stalk is formed by the delta and b chains.

It localises to the cell inner membrane. The enzyme catalyses ATP + H2O + 4 H(+)(in) = ADP + phosphate + 5 H(+)(out). Functionally, produces ATP from ADP in the presence of a proton gradient across the membrane. The alpha chain is a regulatory subunit. The protein is ATP synthase subunit alpha of Pseudomonas savastanoi pv. phaseolicola (strain 1448A / Race 6) (Pseudomonas syringae pv. phaseolicola (strain 1448A / Race 6)).